A 1303-amino-acid polypeptide reads, in one-letter code: Latent-transforming growth factor beta-binding protein 3 (1303 aa).

Residues 1–43 form the signal peptide; that stretch reads MPGPRGAAGGLAPEMRGAGAAGLLALLLLLLLLLLGLGGRVEG. Asn-89 carries N-linked (GlcNAc...) asparagine glycosylation. One can recognise an EGF-like 1 domain in the interval 109–141; the sequence is RVVVCPLPCMNGGQCSSRNQCLCPPDFTGRFCQ. 6 disulfide bridges follow: Cys-113-Cys-123, Cys-117-Cys-129, Cys-131-Cys-140, Cys-279-Cys-303, Cys-289-Cys-316, and Cys-304-Cys-319. A disordered region spans residues 247 to 282; that stretch reads SSNAESAAPSQHLLPHPKPSHPRPPTQKPLGRCFQD. Positions 277-331 constitute a TB 1 domain; that stretch reads GRCFQDTLPKQPCGSNPLPGLTKQEDCCGSIGTAWGQSKCHKCPQLQYTGVQKPG. N-linked (GlcNAc...) asparagine glycosylation is present at Asn-349. Positions 355–395 constitute an EGF-like 2; calcium-binding domain; that stretch reads DINECAMPGVCRHGDCLNNPGSYRCVCPPGHSLGPSRTQCI. Disulfide bonds link Cys-359–Cys-370, Cys-365–Cys-379, Cys-381–Cys-394, Cys-405–Cys-428, Cys-415–Cys-440, Cys-429–Cys-443, and Cys-430–Cys-455. A TB 2 domain is found at 403-455; it reads SLCFRLVSPEHQCQHPLTTRLTRQLCCCSVGKAWGARCQRCPTDGTAAFKEIC. The interval 478-552 is disordered; that stretch reads FSLFLHPDGP…ISRPSPPTMR (75 aa). Over residues 529–540 the composition is skewed to low complexity; sequence PTATTTPARPYP. The EGF-like 3 domain occupies 574 to 615; sequence ETDECRLNQNICGHGECVPGPPDYSCHCNPGYRSHPQHRYCV. 37 disulfide bridges follow: Cys-578–Cys-590, Cys-585–Cys-599, Cys-601–Cys-614, Cys-620–Cys-632, Cys-625–Cys-641, Cys-664–Cys-676, Cys-670–Cys-685, Cys-687–Cys-701, Cys-748–Cys-759, Cys-754–Cys-768, Cys-770–Cys-783, Cys-789–Cys-800, Cys-795–Cys-809, Cys-811–Cys-824, Cys-830–Cys-841, Cys-836–Cys-850, Cys-852–Cys-864, Cys-870–Cys-883, Cys-877–Cys-892, Cys-894–Cys-907, Cys-919–Cys-942, Cys-929–Cys-954, Cys-943–Cys-959, Cys-944–Cys-971, Cys-997–Cys-1010, Cys-1005–Cys-1019, Cys-1021–Cys-1034, Cys-1040–Cys-1051, Cys-1046–Cys-1060, Cys-1062–Cys-1075, Cys-1086–Cys-1097, Cys-1092–Cys-1106, Cys-1108–Cys-1121, Cys-1138–Cys-1162, Cys-1148–Cys-1174, Cys-1163–Cys-1177, and Cys-1164–Cys-1186. The EGF-like 4; calcium-binding domain maps to 616–659; it reads DVNECEAEPCGPGRGICMNTGGSYNCHCNRGYRLHVGAGGRSCV. In terms of domain architecture, EGF-like 5; calcium-binding spans 660-702; that stretch reads DLNECAKPHLCGDGGFCINFPGHYKCNCYPGYRLKASRPPVCE. The region spanning 744-784 is the EGF-like 6; calcium-binding domain; it reads DVNECAEGSPCSPGWCENLPGSFRCTCAQGYAPAPDGRSCL. Positions 785–825 constitute an EGF-like 7; calcium-binding domain; the sequence is DVDECEAGDVCDNGICSNTPGSFQCQCLSGYHLSRDRSHCE. The EGF-like 8; calcium-binding domain occupies 826-865; sequence DIDECDFPAACIGGDCINTNGSYRCLCPQGHRLVGGRKCQ. Asn-845 is a glycosylation site (N-linked (GlcNAc...) asparagine). One can recognise an EGF-like 9; calcium-binding domain in the interval 866 to 908; sequence DIDECSQDPSLCLPHGACKNLQGSYVCVCDEGFTPTQDQHGCE. The TB 3 domain occupies 917–971; the sequence is KECYLNFDDTVFCDSVLATNVTQQECCCSLGAGWGDHCEIYPCPVYSSAEFHSLC. The N-linked (GlcNAc...) asparagine glycan is linked to Asn-936. Positions 993–1035 constitute an EGF-like 10; calcium-binding domain; that stretch reads DIDECMLFGSEICKEGKCVNTQPGYECYCKQGFYYDGNLLECV. Residues 1036-1076 form the EGF-like 11; calcium-binding domain; the sequence is DVDECLDESNCRNGVCENTRGGYRCACTPPAEYSPAQRQCL. Residues 1082–1122 form the EGF-like 12; calcium-binding domain; sequence DVDECQDPAACRPGRCVNLPGSYRCECRPPWVPGPSGRDCQ. Residues 1136 to 1186 form the TB 4 domain; that stretch reads DVCWSQRGEDGMCAGPLAGPALTFDDCCCRQGRGWGAQCRPCPPRGAGSHC. The segment covering 1188–1198 has biased composition (polar residues); it reads TSQSESNSFWD. The segment at 1188–1219 is disordered; sequence TSQSESNSFWDTSPLLLGKPPRDEDSSEEDSD. The 45-residue stretch at 1254–1298 folds into the EGF-like 13; calcium-binding domain; it reads DIDECRELNQRGLLCKSERCVNTSGSFRCVCKAGFARSRPHGACV. Disulfide bonds link Cys-1258–Cys-1273 and Cys-1268–Cys-1282. An N-linked (GlcNAc...) asparagine glycan is attached at Asn-1275.

The protein belongs to the LTBP family. In terms of assembly, forms part of the large latent transforming growth factor beta precursor complex; removal is essential for activation of complex. Interacts with EFEMP2. Post-translationally, contains hydroxylated asparagine residues. In terms of processing, two intrachain disulfide bonds from the TB3 domain are rearranged upon TGFB1 binding, and form interchain bonds with TGFB1 propeptide, anchoring it to the extracellular matrix. Isoform 2: Expressed prominently in heart, skeletal muscle, prostate, testis, small intestine and ovary. Isoform 1: Strongly expressed in pancreas and liver.

The protein resides in the secreted. It is found in the extracellular space. It localises to the extracellular matrix. In terms of biological role, key regulator of transforming growth factor beta (TGFB1, TGFB2 and TGFB3) that controls TGF-beta activation by maintaining it in a latent state during storage in extracellular space. Associates specifically via disulfide bonds with the Latency-associated peptide (LAP), which is the regulatory chain of TGF-beta, and regulates integrin-dependent activation of TGF-beta. This chain is Latent-transforming growth factor beta-binding protein 3 (LTBP3), found in Homo sapiens (Human).